The sequence spans 51 residues: Cytochrome bd ubiquinol oxidase subunit X (51 aa).

Topologically, residues 1–3 (MWY) are cytoplasmic. The chain crosses the membrane as a helical span at residues 4-26 (FSWLLGLPLAAAFAVLNAMWYEL). The Periplasmic segment spans residues 27 to 51 (MDDRARKRLAADPTAELALEGNKHH).

This sequence belongs to the cytochrome ubiquinol oxidase subunit X family. In terms of assembly, may be a subunit of cytochrome ubiquinol oxidase.

It localises to the cell inner membrane. The enzyme catalyses 2 a ubiquinol + O2(in) + 4 H(+)(in) = 2 a ubiquinone + 2 H2O(in) + 4 H(+)(out). The protein operates within energy metabolism; oxidative phosphorylation. In terms of biological role, required for correct functioning of cytochrome bd oxidase. This chain is Cytochrome bd ubiquinol oxidase subunit X (cydX), found in Brucella abortus (strain 2308).